The sequence spans 302 residues: Glycine--tRNA ligase alpha subunit (302 aa).

The protein belongs to the class-II aminoacyl-tRNA synthetase family. As to quaternary structure, tetramer of two alpha and two beta subunits.

It is found in the cytoplasm. The catalysed reaction is tRNA(Gly) + glycine + ATP = glycyl-tRNA(Gly) + AMP + diphosphate. In Wigglesworthia glossinidia brevipalpis, this protein is Glycine--tRNA ligase alpha subunit.